A 281-amino-acid polypeptide reads, in one-letter code: Tetraspanin-5 (281 aa).

Residues 1–7 (MNRMSNT) are Cytoplasmic-facing. A helical transmembrane segment spans residues 8–28 (VIGFLNILTLISSIVLLGSAL). Residues 29-44 (WMGRSKTTCEHFLQKP) are Extracellular-facing. Residues 45–65 (LLILGLAILILSVAGLVGACC) form a helical membrane-spanning segment. Topologically, residues 66–74 (DVAWVLWVY) are cytoplasmic. A helical membrane pass occupies residues 75 to 95 (LFFMVFIIVALMGLTLFGFIV). At 96–221 (TSHSGGVVVD…TVRRDWHKLS (126 aa)) the chain is on the extracellular side. Residues 222–242 (LVNVIVVIFLIAVYCVGCCAF) form a helical membrane-spanning segment. At 243–281 (KNAKRPQHYGFPYGRYGMSKSRPGWEQSWSRWWHGRDRY) the chain is on the cytoplasmic side.

Belongs to the tetraspanin (TM4SF) family.

The protein localises to the membrane. In terms of biological role, may be involved in the regulation of cell differentiation. This Arabidopsis thaliana (Mouse-ear cress) protein is Tetraspanin-5 (TET5).